We begin with the raw amino-acid sequence, 327 residues long: Probable serine/threonine-protein kinase WNK5 (327 aa).

The disordered stretch occupies residues 1–48 (MPPNPTPPRRATTTTTRATSGVRRGEEEQGGMAVSASAGEEEEAFEEV). Positions 9-19 (RRATTTTTRAT) are enriched in low complexity. Residues 39-48 (GEEEEAFEEV) are compositionally biased toward acidic residues. The 260-residue stretch at 55-314 (GRYADVLGLG…AAELLRDPFF (260 aa)) folds into the Protein kinase domain. 136 to 139 (TEVC) lines the ATP pocket. Catalysis depends on Asp-203, which acts as the Proton acceptor.

Belongs to the protein kinase superfamily. Ser/Thr protein kinase family. WNK subfamily.

The enzyme catalyses L-seryl-[protein] + ATP = O-phospho-L-seryl-[protein] + ADP + H(+). It catalyses the reaction L-threonyl-[protein] + ATP = O-phospho-L-threonyl-[protein] + ADP + H(+). The sequence is that of Probable serine/threonine-protein kinase WNK5 (WNK5) from Oryza sativa subsp. japonica (Rice).